The chain runs to 207 residues: Protein 6b (207 aa).

Its function is as follows. Involved in tumor formation and increases auxin and cytokinin effects in host plants. The protein is Protein 6b (6b) of Agrobacterium vitis (Rhizobium vitis).